A 321-amino-acid polypeptide reads, in one-letter code: Glucokinase (321 aa).

8-13 serves as a coordination point for ATP; that stretch reads GDVGGT.

The protein belongs to the bacterial glucokinase family.

Its subcellular location is the cytoplasm. The catalysed reaction is D-glucose + ATP = D-glucose 6-phosphate + ADP + H(+). In Shigella sonnei (strain Ss046), this protein is Glucokinase.